A 245-amino-acid polypeptide reads, in one-letter code: Transmembrane and ubiquitin-like domain-containing protein 1 (245 aa).

Residues 2 to 30 (ALIEGVGDEVTVLFAVLACLLVLALAWVS) form a required to release iHOPS from membranes region. Residues 11–31 (VTVLFAVLACLLVLALAWVST) form a helical membrane-spanning segment. Residues 33–100 (TTESTDPQPQ…ASTPPDSPQE (68 aa)) are disordered. Phosphoserine occurs at positions 73, 97, and 126. Positions 102 to 175 (LLLRLKFLND…LHCHVSTRVG (74 aa)) constitute a Ubiquitin-like domain. The next 2 helical transmembrane spans lie at 194–214 (IGSLLLPLLLLLLLLLWYCQI) and 219–239 (FFPLTATLGLAGFTLLLSLLA).

As to quaternary structure, interacts with EEF1A1, CAMLG, GRIA2 and GRIP1. Interacts with NPM1 and CDKN2A; TMUB1 can enhance interaction between NPM1 and CDKN2A and is proposed to bridge the proteins; proposed to be mediated by iHOPS. Interacts with TUBG1. Interacts with ERLIN2 and AMFR; TMUB1 promotes the interaction of ERLIN2 with AMFR. In terms of processing, isoform 1 (lHOPS) is processed by regulated intramembrane proteolysis (RIP) in the N-terminus to release iHOPS from membranes. Isoform 2 seems to undergo a selective cleavage in the C-terminal region to release an additional cytoplasmic form. Expressed in adult brain; at protein level. Isoform 1 (lHOPS) is highly expressed in small intestine, stomach and epididymis. Isoform 2 (sHOPS) and iHOPS are abundantly expressed in brain, liver and adrenal gland.

Its subcellular location is the membrane. It is found in the postsynaptic cell membrane. The protein resides in the recycling endosome. The protein localises to the cytoplasm. It localises to the nucleus. Its subcellular location is the nucleolus. It is found in the cytoskeleton. The protein resides in the microtubule organizing center. The protein localises to the centrosome. In terms of biological role, involved in sterol-regulated ubiquitination and degradation of HMG-CoA reductase HMGCR. Involved in positive regulation of AMPA-selective glutamate receptor GRIA2 recycling to the cell surface. Acts as a negative regulator of hepatocyte growth during regeneration. Functionally, may contribute to the regulation of translation during cell-cycle progression. May contribute to the regulation of cell proliferation. May be involved in centrosome assembly. Modulates stabilization and nucleolar localization of tumor suppressor CDKN2A and enhances association between CDKN2A and NPM1. The chain is Transmembrane and ubiquitin-like domain-containing protein 1 (Tmub1) from Mus musculus (Mouse).